Consider the following 290-residue polypeptide: Acetylglutamate kinase (290 aa).

Residues 64–65, R86, and N183 contribute to the substrate site; that span reads GG.

Belongs to the acetylglutamate kinase family. ArgB subfamily.

It localises to the cytoplasm. The catalysed reaction is N-acetyl-L-glutamate + ATP = N-acetyl-L-glutamyl 5-phosphate + ADP. It participates in amino-acid biosynthesis; L-arginine biosynthesis; N(2)-acetyl-L-ornithine from L-glutamate: step 2/4. Catalyzes the ATP-dependent phosphorylation of N-acetyl-L-glutamate. The chain is Acetylglutamate kinase from Halothermothrix orenii (strain H 168 / OCM 544 / DSM 9562).